A 63-amino-acid chain; its full sequence is Beta-defensin 4 (63 aa).

The signal sequence occupies residues 1–22; that stretch reads MRLHHLLLAVLFLVLSAGSGFT. Position 23 is a pyrrolidone carboxylic acid (Q23). Intrachain disulfides connect C31/C60, C38/C53, and C43/C61.

The protein belongs to the beta-defensin family. In terms of tissue distribution, neutrophilic granules.

Its subcellular location is the secreted. Functionally, has bactericidal activity. Active against E.coli ML35 and S.aureus 502A. The polypeptide is Beta-defensin 4 (DEFB4) (Bos taurus (Bovine)).